We begin with the raw amino-acid sequence, 358 residues long: Pyruvate dehydrogenase E1 component subunit alpha (358 aa).

In terms of assembly, heterodimer of an alpha and a beta chain. It depends on thiamine diphosphate as a cofactor.

It catalyses the reaction N(6)-[(R)-lipoyl]-L-lysyl-[protein] + pyruvate + H(+) = N(6)-[(R)-S(8)-acetyldihydrolipoyl]-L-lysyl-[protein] + CO2. The pyruvate dehydrogenase complex catalyzes the overall conversion of pyruvate to acetyl-CoA and CO(2). It contains multiple copies of three enzymatic components: pyruvate dehydrogenase (E1), dihydrolipoamide acetyltransferase (E2) and lipoamide dehydrogenase (E3). The polypeptide is Pyruvate dehydrogenase E1 component subunit alpha (pdhA) (Mycoplasma pneumoniae (strain ATCC 29342 / M129 / Subtype 1) (Mycoplasmoides pneumoniae)).